Here is a 523-residue protein sequence, read N- to C-terminus: Light-independent protochlorophyllide reductase subunit B (523 aa).

Asp-36 contacts [4Fe-4S] cluster. Residue Asp-290 is the Proton donor of the active site. 425-426 (GL) contacts substrate.

This sequence belongs to the ChlB/BchB/BchZ family. Protochlorophyllide reductase is composed of three subunits; ChlL, ChlN and ChlB. Forms a heterotetramer of two ChlB and two ChlN subunits. [4Fe-4S] cluster serves as cofactor.

The catalysed reaction is chlorophyllide a + oxidized 2[4Fe-4S]-[ferredoxin] + 2 ADP + 2 phosphate = protochlorophyllide a + reduced 2[4Fe-4S]-[ferredoxin] + 2 ATP + 2 H2O. The protein operates within porphyrin-containing compound metabolism; chlorophyll biosynthesis (light-independent). Functionally, component of the dark-operative protochlorophyllide reductase (DPOR) that uses Mg-ATP and reduced ferredoxin to reduce ring D of protochlorophyllide (Pchlide) to form chlorophyllide a (Chlide). This reaction is light-independent. The NB-protein (ChlN-ChlB) is the catalytic component of the complex. In Prochlorococcus marinus (strain MIT 9301), this protein is Light-independent protochlorophyllide reductase subunit B.